A 508-amino-acid chain; its full sequence is 3-octaprenyl-4-hydroxybenzoate carboxy-lyase (508 aa).

Asn-172 provides a ligand contact to Mn(2+). Prenylated FMN contacts are provided by residues 175–177 (IYR), 189–191 (RWL), and 194–195 (RG). Glu-238 lines the Mn(2+) pocket. The active-site Proton donor is Asp-287. Residues 483-508 (GEYGIATPPPPPRHSPPSDERGHDDV) form a disordered region. Positions 498–508 (PPSDERGHDDV) are enriched in basic and acidic residues.

This sequence belongs to the UbiD family. In terms of assembly, homohexamer. The cofactor is prenylated FMN. Mn(2+) serves as cofactor.

The protein localises to the cell membrane. The catalysed reaction is a 4-hydroxy-3-(all-trans-polyprenyl)benzoate + H(+) = a 2-(all-trans-polyprenyl)phenol + CO2. The protein operates within cofactor biosynthesis; ubiquinone biosynthesis. Functionally, catalyzes the decarboxylation of 3-octaprenyl-4-hydroxy benzoate to 2-octaprenylphenol, an intermediate step in ubiquinone biosynthesis. The chain is 3-octaprenyl-4-hydroxybenzoate carboxy-lyase from Chromohalobacter salexigens (strain ATCC BAA-138 / DSM 3043 / CIP 106854 / NCIMB 13768 / 1H11).